Here is a 232-residue protein sequence, read N- to C-terminus: tRNA1(Val) (adenine(37)-N6)-methyltransferase (232 aa).

This sequence belongs to the methyltransferase superfamily. tRNA (adenine-N(6)-)-methyltransferase family.

It localises to the cytoplasm. The catalysed reaction is adenosine(37) in tRNA1(Val) + S-adenosyl-L-methionine = N(6)-methyladenosine(37) in tRNA1(Val) + S-adenosyl-L-homocysteine + H(+). Its function is as follows. Specifically methylates the adenine in position 37 of tRNA(1)(Val) (anticodon cmo5UAC). This Pseudoalteromonas translucida (strain TAC 125) protein is tRNA1(Val) (adenine(37)-N6)-methyltransferase.